A 536-amino-acid chain; its full sequence is Cytochrome P450 monooxygenase fscF (536 aa).

Residues Val9–Tyr29 form a helical membrane-spanning segment. Cys464 serves as a coordination point for heme.

Belongs to the cytochrome P450 family. Heme is required as a cofactor.

The protein localises to the membrane. It functions in the pathway secondary metabolite biosynthesis. Functionally, cytochrome P450 monooxygenase; part of the fragmented gene cluster that mediates the biosynthesis of fusarochromene, a tryptophan-derived metabolite closely related to a group of mycotoxins including fusarochromanone. Within the pathway, fscF catalyzes the epoxidation of desacetylfusarochromene which opens the way to the production of fusarochromanones. The first step of the pathway is the epimerization of L-tryptophan to D-tryptophan in the presence of the NRPS-like tryptophan epimerase fscC. D-tryptophan is subsequently hydroxylated by the tryptophan 6-hydroxylase fscE to yield 6-hydroxytryptophan. The pyrrole ring undergoes cleavaged by the tryptophan 2,3-dioxygenase fscD and is finally converted to 4-hydroxykyrunenine by the hydrolase fscH. The NRPS-like oxidoreductase fscA reduces the carboxyl group to primary alcohol and the DMATS-type prenyltransferase fscG performs prenylation, followed by the formation of a chromene ring catalyzed by the oxidoreductase fscI, which leads to desacetylfusarochromene. Epoxidation by fscF and rearrangement reactions of chromene double bonds convert compound desacetylfusarochromene to fusarochromanones. Although specific acetyltransferases were not found near the fsc gene cluster, several predicted enzymes containing the N-acetyltransferase superfamily domain are present in the genome of F.equiseti. These predicted enzymes may have the potential to convert desacetylfusarochromene to fusarochromene. The polypeptide is Cytochrome P450 monooxygenase fscF (Fusarium equiseti (Fusarium scirpi)).